The chain runs to 432 residues: Adenylosuccinate synthetase (432 aa).

Residues 12 to 18 and 40 to 42 each bind GTP; these read GDEGKGK and GHT. The active-site Proton acceptor is Asp-13. 2 residues coordinate Mg(2+): Asp-13 and Gly-40. IMP-binding positions include 13–16, 38–41, Thr-132, Arg-146, Gln-226, Thr-241, and Arg-305; these read DEGK and NAGH. The Proton donor role is filled by His-41. Substrate is bound at residue 301 to 307; the sequence is VVTGRKR. GTP-binding positions include Arg-307, 333-335, and 415-417; these read KLD and STS.

Belongs to the adenylosuccinate synthetase family. As to quaternary structure, homodimer. Mg(2+) serves as cofactor.

Its subcellular location is the cytoplasm. The enzyme catalyses IMP + L-aspartate + GTP = N(6)-(1,2-dicarboxyethyl)-AMP + GDP + phosphate + 2 H(+). It functions in the pathway purine metabolism; AMP biosynthesis via de novo pathway; AMP from IMP: step 1/2. Its function is as follows. Plays an important role in the de novo pathway of purine nucleotide biosynthesis. Catalyzes the first committed step in the biosynthesis of AMP from IMP. In Mesorhizobium japonicum (strain LMG 29417 / CECT 9101 / MAFF 303099) (Mesorhizobium loti (strain MAFF 303099)), this protein is Adenylosuccinate synthetase.